Consider the following 688-residue polypeptide: TBC1 domain family member 25 (688 aa).

The interval 1–27 (MATASGASDLSGSGAPPPGVGAQAAAA) is disordered. A Phosphoserine modification is found at Ser140. Thr160 bears the Phosphothreonine mark. The 207-residue stretch at 228–434 (GVEPSLRKVV…RMLEVTWSSL (207 aa)) folds into the Rab-GAP TBC domain. Ser506 bears the Phosphoserine mark. Residues 544-567 (LNSPDPLLSSFSHPDSPSSSSPPS) are compositionally biased toward low complexity. Residues 544 to 606 (LNSPDPLLSS…LPPVPPMGLP (63 aa)) are disordered. The segment covering 596 to 606 (SLPPVPPMGLP) has biased composition (pro residues).

As to quaternary structure, interacts (via N-terminus) with MAP1LC3B, GABARAP and GABARAPL2.

It localises to the cytoplasm. The protein resides in the cytoplasmic vesicle. Its subcellular location is the autophagosome. In terms of biological role, acts as a GTPase-activating protein specific for RAB33B. Involved in the regulation of autophagosome maturation, the process in which autophagosomes fuse with endosomes and lysosomes. This Homo sapiens (Human) protein is TBC1 domain family member 25 (TBC1D25).